The primary structure comprises 433 residues: Tol-Pal system protein TolB (433 aa).

Positions 1–26 (MSLMTKLGFRALVASCLIAAGGAAHA) are cleaved as a signal peptide.

The protein belongs to the TolB family. The Tol-Pal system is composed of five core proteins: the inner membrane proteins TolA, TolQ and TolR, the periplasmic protein TolB and the outer membrane protein Pal. They form a network linking the inner and outer membranes and the peptidoglycan layer.

The protein localises to the periplasm. In terms of biological role, part of the Tol-Pal system, which plays a role in outer membrane invagination during cell division and is important for maintaining outer membrane integrity. The protein is Tol-Pal system protein TolB of Burkholderia thailandensis (strain ATCC 700388 / DSM 13276 / CCUG 48851 / CIP 106301 / E264).